Reading from the N-terminus, the 804-residue chain is Pentatricopeptide repeat-containing protein At4g35130, chloroplastic (804 aa).

The transit peptide at Met-1 to Lys-19 directs the protein to the chloroplast. 16 PPR repeats span residues Asn-63–Ala-93, Asp-94–Ala-128, Asp-129–Ser-163, Asp-164–Arg-194, Asp-195–Pro-229, Asp-230–Thr-264, Asp-266–Arg-296, Asn-297–Pro-332, Asp-333–Pro-363, His-364–Lys-394, Asn-395–Pro-429, Asp-430–Ser-464, Asn-465–Lys-495, Asp-496–Pro-530, Asn-531–Glu-561, and Gly-567–Val-597. Positions Ile-602–Lys-677 are type E motif. The segment at Gly-678–Gly-708 is type E(+) motif. Residues Glu-710 to Trp-804 form a type DYW motif region.

The protein belongs to the PPR family. PCMP-H subfamily.

It is found in the plastid. The protein localises to the chloroplast. This chain is Pentatricopeptide repeat-containing protein At4g35130, chloroplastic (PCMP-H27), found in Arabidopsis thaliana (Mouse-ear cress).